Here is a 117-residue protein sequence, read N- to C-terminus: Acylphosphatase (117 aa).

One can recognise an Acylphosphatase-like domain in the interval 31-117 (RWRWIIQGQV…RGDDWFEVRY (87 aa)). Residues R46 and N64 contribute to the active site.

Belongs to the acylphosphatase family.

It carries out the reaction an acyl phosphate + H2O = a carboxylate + phosphate + H(+). In Synechococcus sp. (strain CC9902), this protein is Acylphosphatase (acyP).